A 179-amino-acid polypeptide reads, in one-letter code: Interleukin-10 (179 aa).

The first 19 residues, 1-19 (MPSSSALLCCLVFLAGVAA), serve as a signal peptide directing secretion. 2 disulfides stabilise this stretch: cysteine 31-cysteine 127 and cysteine 81-cysteine 133. Asparagine 135 carries N-linked (GlcNAc...) asparagine glycosylation.

This sequence belongs to the IL-10 family. In terms of assembly, homodimer. Interacts with IL10RA and IL10RB.

It localises to the secreted. In terms of biological role, major immune regulatory cytokine that acts on many cells of the immune system where it has profound anti-inflammatory functions, limiting excessive tissue disruption caused by inflammation. Mechanistically, IL10 binds to its heterotetrameric receptor comprising IL10RA and IL10RB leading to JAK1 and STAT2-mediated phosphorylation of STAT3. In turn, STAT3 translocates to the nucleus where it drives expression of anti-inflammatory mediators. Targets antigen-presenting cells (APCs) such as macrophages and monocytes and inhibits their release of pro-inflammatory cytokines including granulocyte-macrophage colony-stimulating factor /GM-CSF, granulocyte colony-stimulating factor/G-CSF, IL-1 alpha, IL-1 beta, IL-6, IL-8 and TNF-alpha. Also interferes with antigen presentation by reducing the expression of MHC-class II and co-stimulatory molecules, thereby inhibiting their ability to induce T cell activation. In addition, controls the inflammatory response of macrophages by reprogramming essential metabolic pathways including mTOR signaling. The sequence is that of Interleukin-10 (IL10) from Cervus elaphus (Red deer).